The sequence spans 403 residues: Argininosuccinate synthase (403 aa).

10–18 provides a ligand contact to ATP; that stretch reads AYSGGLDTS. Tyr-87 lines the L-citrulline pocket. An ATP-binding site is contributed by Gly-117. L-aspartate-binding residues include Thr-119, Asn-123, and Asp-124. Residue Asn-123 participates in L-citrulline binding. The L-citrulline site is built by Arg-127, Ser-175, Glu-260, and Tyr-272.

It belongs to the argininosuccinate synthase family. Type 1 subfamily. In terms of assembly, homotetramer.

Its subcellular location is the cytoplasm. The enzyme catalyses L-citrulline + L-aspartate + ATP = 2-(N(omega)-L-arginino)succinate + AMP + diphosphate + H(+). Its pathway is amino-acid biosynthesis; L-arginine biosynthesis; L-arginine from L-ornithine and carbamoyl phosphate: step 2/3. This Bacillus velezensis (strain DSM 23117 / BGSC 10A6 / LMG 26770 / FZB42) (Bacillus amyloliquefaciens subsp. plantarum) protein is Argininosuccinate synthase.